Reading from the N-terminus, the 351-residue chain is Anthranilate phosphoribosyltransferase (351 aa).

5-phospho-alpha-D-ribose 1-diphosphate-binding positions include Gly85, 88–89 (GD), Ser93, 95–98 (NIST), 113–121 (KHGNRAASS), and Thr125. Gly85 contacts anthranilate. Ser97 provides a ligand contact to Mg(2+). Asn116 is an anthranilate binding site. Residue Arg171 coordinates anthranilate. Positions 229 and 230 each coordinate Mg(2+).

Belongs to the anthranilate phosphoribosyltransferase family. As to quaternary structure, homodimer. Mg(2+) serves as cofactor.

It catalyses the reaction N-(5-phospho-beta-D-ribosyl)anthranilate + diphosphate = 5-phospho-alpha-D-ribose 1-diphosphate + anthranilate. It functions in the pathway amino-acid biosynthesis; L-tryptophan biosynthesis; L-tryptophan from chorismate: step 2/5. In terms of biological role, catalyzes the transfer of the phosphoribosyl group of 5-phosphorylribose-1-pyrophosphate (PRPP) to anthranilate to yield N-(5'-phosphoribosyl)-anthranilate (PRA). The chain is Anthranilate phosphoribosyltransferase from Saccharopolyspora erythraea (strain ATCC 11635 / DSM 40517 / JCM 4748 / NBRC 13426 / NCIMB 8594 / NRRL 2338).